The following is a 424-amino-acid chain: Serine--tRNA ligase (424 aa).

230 to 232 (TAE) lines the L-serine pocket. 261–263 (RAE) serves as a coordination point for ATP. Glu-284 serves as a coordination point for L-serine. Position 348–351 (348–351 (EISS)) interacts with ATP. Ser-384 serves as a coordination point for L-serine.

This sequence belongs to the class-II aminoacyl-tRNA synthetase family. Type-1 seryl-tRNA synthetase subfamily. In terms of assembly, homodimer. The tRNA molecule binds across the dimer.

The protein resides in the cytoplasm. The catalysed reaction is tRNA(Ser) + L-serine + ATP = L-seryl-tRNA(Ser) + AMP + diphosphate + H(+). The enzyme catalyses tRNA(Sec) + L-serine + ATP = L-seryl-tRNA(Sec) + AMP + diphosphate + H(+). The protein operates within aminoacyl-tRNA biosynthesis; selenocysteinyl-tRNA(Sec) biosynthesis; L-seryl-tRNA(Sec) from L-serine and tRNA(Sec): step 1/1. Functionally, catalyzes the attachment of serine to tRNA(Ser). Is also able to aminoacylate tRNA(Sec) with serine, to form the misacylated tRNA L-seryl-tRNA(Sec), which will be further converted into selenocysteinyl-tRNA(Sec). In Desulforamulus reducens (strain ATCC BAA-1160 / DSM 100696 / MI-1) (Desulfotomaculum reducens), this protein is Serine--tRNA ligase.